Here is a 216-residue protein sequence, read N- to C-terminus: Probable methylthioribulose-1-phosphate dehydratase (216 aa).

Position 87 (C87) interacts with substrate. Zn(2+) is bound by residues H105 and H107. E129 acts as the Proton donor/acceptor in catalysis.

Belongs to the aldolase class II family. MtnB subfamily. Zn(2+) is required as a cofactor.

The protein resides in the cytoplasm. The catalysed reaction is 5-(methylsulfanyl)-D-ribulose 1-phosphate = 5-methylsulfanyl-2,3-dioxopentyl phosphate + H2O. It participates in amino-acid biosynthesis; L-methionine biosynthesis via salvage pathway; L-methionine from S-methyl-5-thio-alpha-D-ribose 1-phosphate: step 2/6. In terms of biological role, catalyzes the dehydration of methylthioribulose-1-phosphate (MTRu-1-P) into 2,3-diketo-5-methylthiopentyl-1-phosphate (DK-MTP-1-P). This is Probable methylthioribulose-1-phosphate dehydratase from Drosophila persimilis (Fruit fly).